We begin with the raw amino-acid sequence, 413 residues long: Serine hydroxymethyltransferase (413 aa).

(6S)-5,6,7,8-tetrahydrofolate-binding positions include leucine 115 and 119-121 (GHL). Lysine 224 is subject to N6-(pyridoxal phosphate)lysine.

It belongs to the SHMT family. As to quaternary structure, homodimer. Requires pyridoxal 5'-phosphate as cofactor.

Its subcellular location is the cytoplasm. The catalysed reaction is (6R)-5,10-methylene-5,6,7,8-tetrahydrofolate + glycine + H2O = (6S)-5,6,7,8-tetrahydrofolate + L-serine. It participates in one-carbon metabolism; tetrahydrofolate interconversion. The protein operates within amino-acid biosynthesis; glycine biosynthesis; glycine from L-serine: step 1/1. In terms of biological role, catalyzes the reversible interconversion of serine and glycine with tetrahydrofolate (THF) serving as the one-carbon carrier. This reaction serves as the major source of one-carbon groups required for the biosynthesis of purines, thymidylate, methionine, and other important biomolecules. Also exhibits THF-independent aldolase activity toward beta-hydroxyamino acids, producing glycine and aldehydes, via a retro-aldol mechanism. This Mycoplasma capricolum subsp. capricolum (strain California kid / ATCC 27343 / NCTC 10154) protein is Serine hydroxymethyltransferase.